We begin with the raw amino-acid sequence, 328 residues long: Dolichyl-diphosphooligosaccharide--protein glycosyltransferase subunit MAGT1 (328 aa).

Positions 1–22 (MLHKLLIVVFLVVCLHDMRLNG) are cleaved as a signal peptide. Residues 23–177 (QKKKETLLSE…DVHIRVIRPP (155 aa)) lie on the Extracellular side of the membrane. The Thioredoxin domain occupies 40–168 (WVSKRAVVRL…LARWVADRTD (129 aa)). N64 carries N-linked (GlcNAc...) asparagine glycosylation. A disulfide bond links C80 and C83. Residues 178 to 198 (NYAGPLMLGLLLAFIGSLAYL) traverse the membrane as a helical segment. The Cytoplasmic portion of the chain corresponds to 199 to 202 (RRNN). Residues 203–223 (LEFLFNKNVWAFSALCFVLIM) traverse the membrane as a helical segment. The Extracellular portion of the chain corresponds to 224–257 (TSGQMWNHIRGPPYAHKNPNTGQVSYIHGSSQAQ). A helical membrane pass occupies residues 258–278 (FVAETHIVLLFNAAVTIGMVL). Residues 279–293 (LHEAATSGLDIVKRK) lie on the Cytoplasmic side of the membrane. The helical transmembrane segment at 294-314 (IMCVAGIGLVVLFFSWLLSVF) threads the bilayer. Residues 315 to 328 (RAKYHGYPYSFLFG) lie on the Extracellular side of the membrane.

This sequence belongs to the OST3/OST6 family. As to quaternary structure, accessory component of the STT3B-containing form of the oligosaccharyltransferase (OST) complex.

It localises to the cell membrane. The protein resides in the endoplasmic reticulum. Its subcellular location is the endoplasmic reticulum membrane. The protein operates within protein modification; protein glycosylation. Functionally, accessory component of the STT3B-containing form of the N-oligosaccharyl transferase (OST) complex which catalyzes the transfer of a high mannose oligosaccharide from a lipid-linked oligosaccharide donor to an asparagine residue within an Asn-X-Ser/Thr consensus motif in nascent polypeptide chains. Involved in N-glycosylation of STT3B-dependent substrates. Specifically required for the glycosylation of a subset of acceptor sites that are near cysteine residues; in this function seems to act redundantly with TUSC3. In its oxidized form proposed to form transient mixed disulfides with a glycoprotein substrate to facilitate access of STT3B to the unmodified acceptor site. Also has oxidoreductase-independent functions in the STT3B-containing OST complex possibly involving substrate recognition. Could indirectly play a role in Mg(2+) transport. The protein is Dolichyl-diphosphooligosaccharide--protein glycosyltransferase subunit MAGT1 of Danio rerio (Zebrafish).